Reading from the N-terminus, the 128-residue chain is Protein C10 (128 aa).

This sequence belongs to the UPF0456 family.

Its subcellular location is the cytoplasm. The sequence is that of Protein C10 from Xenopus tropicalis (Western clawed frog).